A 351-amino-acid chain; its full sequence is uncharacterized protein (351 aa).

The 56-residue stretch at 14-69 (PRLADIAAQAQVSEATASRVLNGRPASRXSTRQRVLAALDLLGYERPTRLRRRSAG) folds into the HTH lacI-type domain. Residues 16–35 (LADIAAQAQVSEATASRVLN) constitute a DNA-binding region (H-T-H motif).

Putative sugar-binding regulatory protein for the alpha-amylase gene. This is an uncharacterized protein from Streptomyces limosus (Streptomyces albidoflavus).